The sequence spans 428 residues: Enolase (428 aa).

Gln163 contributes to the (2R)-2-phosphoglycerate binding site. The active-site Proton donor is Glu205. Mg(2+) contacts are provided by Asp242, Glu285, and Asp312. Positions 337, 366, 367, and 388 each coordinate (2R)-2-phosphoglycerate. Lys337 functions as the Proton acceptor in the catalytic mechanism.

Belongs to the enolase family. Mg(2+) serves as cofactor.

It is found in the cytoplasm. It localises to the secreted. Its subcellular location is the cell surface. The enzyme catalyses (2R)-2-phosphoglycerate = phosphoenolpyruvate + H2O. The protein operates within carbohydrate degradation; glycolysis; pyruvate from D-glyceraldehyde 3-phosphate: step 4/5. In terms of biological role, catalyzes the reversible conversion of 2-phosphoglycerate (2-PG) into phosphoenolpyruvate (PEP). It is essential for the degradation of carbohydrates via glycolysis. This Novosphingobium aromaticivorans (strain ATCC 700278 / DSM 12444 / CCUG 56034 / CIP 105152 / NBRC 16084 / F199) protein is Enolase.